A 353-amino-acid chain; its full sequence is Putative permease PerM (353 aa).

Helical transmembrane passes span 19–39 (IALL…SGLL), 72–92 (IVLV…LPIA), 156–176 (LVGL…VFFL), 217–237 (VLEM…FGLN), 240–260 (LLLA…AFVV), 281–301 (CFAV…PVLF), and 310–330 (LVII…GVFF).

This sequence belongs to the autoinducer-2 exporter (AI-2E) (TC 2.A.86) family.

It is found in the cell membrane. The sequence is that of Putative permease PerM (perM) from Escherichia coli O157:H7.